Reading from the N-terminus, the 696-residue chain is Mitosis initiation protein fs(1)Ya (696 aa).

3 disordered regions span residues 245–285 (NAST…RAWK), 336–379 (EHSS…YSTS), and 457–492 (IKFETPPKSSQQMRSNGEGDETKDQFFTPEPGTPEI). Low complexity-rich tracts occupy residues 270–281 (QQQQQQQQPLQQ) and 361–379 (SESSASEVNSGSSSSYSTS). Positions 448–696 (TGAGINKKQI…REPIERMRRQ (249 aa)) are rich in charged AA. Phosphothreonine occurs at positions 478, 484, and 489. 2 consecutive short sequence motifs (nuclear localization signal) follow at residues 512–520 (PKKDKPKEK) and 534–538 (QPRVR). Disordered regions lie at residues 555-586 (DVGEPEVVDAEEEDEVFRPTNASTCNDKKLEA) and 603-696 (PASL…MRRQ). Acidic residues predominate over residues 557-569 (GEPEVVDAEEEDE). 2 stretches are compositionally biased toward basic and acidic residues: residues 607–624 (RGEREKDRDRDRDSDKEN) and 685–696 (RPREPIERMRRQ).

The protein resides in the nucleus envelope. Its subcellular location is the nucleus. It localises to the nucleoplasm. It is found in the cytoplasm. Its function is as follows. Cell cycle-dependent nuclear envelope component required for embryonic mitosis. The sequence is that of Mitosis initiation protein fs(1)Ya (fs(1)Ya) from Drosophila melanogaster (Fruit fly).